A 661-amino-acid polypeptide reads, in one-letter code: UvrABC system protein B (661 aa).

The Helicase ATP-binding domain occupies 28–414 (DGVNEGKRHQ…HTDEMVEQII (387 aa)). Residue 41–48 (GATGTGKT) coordinates ATP. The Beta-hairpin motif lies at 94-117 (YYDYYQPEAYVPSTDTFIEKDASI). The 167-residue stretch at 432 to 598 (QIDDLLSEIQ…TINKKIHDVI (167 aa)) folds into the Helicase C-terminal domain. The segment at 603–624 (ESDETNQQQQTELPKKMTKKER) is disordered. The UVR domain maps to 625-660 (QKTIENIEKEMKKAAKDLDFEKATELRDMLFELKAE).

The protein belongs to the UvrB family. In terms of assembly, forms a heterotetramer with UvrA during the search for lesions. Interacts with UvrC in an incision complex.

The protein localises to the cytoplasm. Its function is as follows. The UvrABC repair system catalyzes the recognition and processing of DNA lesions. A damage recognition complex composed of 2 UvrA and 2 UvrB subunits scans DNA for abnormalities. Upon binding of the UvrA(2)B(2) complex to a putative damaged site, the DNA wraps around one UvrB monomer. DNA wrap is dependent on ATP binding by UvrB and probably causes local melting of the DNA helix, facilitating insertion of UvrB beta-hairpin between the DNA strands. Then UvrB probes one DNA strand for the presence of a lesion. If a lesion is found the UvrA subunits dissociate and the UvrB-DNA preincision complex is formed. This complex is subsequently bound by UvrC and the second UvrB is released. If no lesion is found, the DNA wraps around the other UvrB subunit that will check the other stand for damage. The sequence is that of UvrABC system protein B from Staphylococcus epidermidis (strain ATCC 35984 / DSM 28319 / BCRC 17069 / CCUG 31568 / BM 3577 / RP62A).